An 830-amino-acid chain; its full sequence is Adhesion G protein-coupled receptor E2 (830 aa).

The signal sequence occupies residues 1 to 22 (MRHGHPRLLPGLLMLLLLPLGA). Over 23–540 (AAQKTSGCAR…MAHYDVQEED (518 aa)) the chain is Extracellular. The region spanning 26 to 68 (KTSGCARWCPPKSTCVNATTCRCSPGFSSLSGEIFSSPLESCD) is the EGF-like 1 domain. Cystine bridges form between Cys-30/Cys-40, Cys-34/Cys-46, Cys-48/Cys-67, Cys-73/Cys-87, and Cys-81/Cys-96. A glycan (N-linked (GlcNAc...) asparagine) is linked at Asn-42. In terms of domain architecture, EGF-like 1; calcium-binding spans 69–108 (DIDECGPPPLVSCGRLADCQNTEGSYHCMCSPGYALASGA). Residue Asn-113 is glycosylated (N-linked (GlcNAc...) asparagine). An EGF-like 2; calcium-binding domain is found at 121–159 (DVDECQLKPRVCKSRGICTNTKGSYTCKCPPGFELNLGD). Cystine bridges form between Cys-125/Cys-138, Cys-132/Cys-147, Cys-169/Cys-182, Cys-176/Cys-191, Cys-218/Cys-231, and Cys-225/Cys-240. The region spanning 165–203 (DVNECTSGQNPCHNSTHCLNNIGGYECRCRPGWKPVPGS) is the EGF-like 3; calcium-binding domain. N-linked (GlcNAc...) asparagine glycosylation occurs at Asn-178. The EGF-like 4; calcium-binding domain maps to 214-253 (DVDECSSGKHTCHYSTVCINTVGSYKCRCRRGWKPKPRFQ). N-linked (GlcNAc...) asparagine glycosylation is found at Asn-258, Asn-348, Asn-361, and Asn-379. In terms of domain architecture, GAIN-B spans 358–537 (WTFNASAGTD…AVLMAHYDVQ (180 aa)). Disulfide bonds link Cys-489–Cys-519 and Cys-507–Cys-521. The GPS stretch occupies residues 489-537 (CVFWEHSQDECGHWSTRGCTVVDSGDTSTTCQCTHLSSFAVLMAHYDVQ). A helical transmembrane segment spans residues 541–561 (LVLPVITYVGLGLSLLCLLLA). Residues 562 to 576 (ALTFLLCKAIQNTST) are Cytoplasmic-facing. A helical membrane pass occupies residues 577-597 (SLHLQLLICLFLAHLLFLMAI). Over 598-603 (DRTEIK) the chain is Extracellular. The helical transmembrane segment at 604–624 (VLCSIIAGALHYLYLASFTWM) threads the bilayer. Topologically, residues 625–651 (LLEGLHLFLTARNLMVVNYSSVSMLMK) are cytoplasmic. Residues 652-672 (KLMYPVGYGVPTLIVAISAAS) form a helical membrane-spanning segment. Topologically, residues 673–690 (RSHLYGTRTRCWLNPEER) are extracellular. A helical transmembrane segment spans residues 691–711 (FIWSFLGPVCTIFSVNLGFFL). Residues 712 to 744 (MTLWILKSKLSSLNSDVSTLQNTRMLTFKAIAQ) are Cytoplasmic-facing. The helical transmembrane segment at 745–765 (LFILGCTWCLGILQVGPAAHV) threads the bilayer. Residues 766-767 (MA) are Extracellular-facing. Residues 768–788 (YLFTIINSLQGVFIFLVYCLL) form a helical membrane-spanning segment. At 789 to 830 (SQQVREEYGKWFKGIRKTRAESEKYTLSSRAMSDVNKPMMVN) the chain is on the cytoplasmic side.

It belongs to the G-protein coupled receptor 2 family. Adhesion G-protein coupled receptor (ADGR) subfamily. In terms of assembly, forms a heterodimer, consisting of a large extracellular region non-covalently linked to a seven-transmembrane moiety. Interacts with chondroitin sulfate; the interaction with chondroitin sulfate is calcium-dependent. Interacts with CD55. Autoproteolytically cleaved into 2 subunits, an extracellular alpha subunit and a seven-transmembrane beta subunit.

The protein resides in the cell membrane. The protein localises to the cell projection. It localises to the ruffle membrane. In terms of biological role, cell surface receptor that binds to the chondroitin sulfate moiety of glycosaminoglycan chains and promotes cell attachment. Promotes granulocyte chemotaxis, degranulation and adhesion. In macrophages, promotes the release of inflammatory cytokines, including IL8 and TNF. Signals probably through G-proteins. In Canis lupus familiaris (Dog), this protein is Adhesion G protein-coupled receptor E2 (ADGRE2).